A 314-amino-acid polypeptide reads, in one-letter code: Vacuolar membrane protein SCRG_03194 (314 aa).

The tract at residues 32–60 (KPTSSVVSETSSKSLPSLTSSAFSTSSGA) is disordered. The helical transmembrane segment at 93 to 113 (VYIAVGAVIGAIFISILIWWL) threads the bilayer. Phosphoserine occurs at positions 148, 254, and 274. The disordered stretch occupies residues 240 to 309 (EERKLNLNRP…PSMFLDDVLN (70 aa)). Residues 254 to 269 (SPERKEKKINSMEGYH) show a composition bias toward basic and acidic residues.

Belongs to the PRM5 family.

It localises to the vacuole membrane. The sequence is that of Vacuolar membrane protein SCRG_03194 from Saccharomyces cerevisiae (strain RM11-1a) (Baker's yeast).